The sequence spans 53 residues: UPF0391 membrane protein ESA_03375 (53 aa).

2 consecutive transmembrane segments (helical) span residues 4-24 and 28-48; these read WGIIFLVIALIAAALGFGGLA and AGAAKIVFVVGIILFLVSLFM.

Belongs to the UPF0391 family.

The protein localises to the cell membrane. This chain is UPF0391 membrane protein ESA_03375, found in Cronobacter sakazakii (strain ATCC BAA-894) (Enterobacter sakazakii).